Reading from the N-terminus, the 579-residue chain is ATP-dependent lipid A-core flippase (579 aa).

4 helical membrane passes run Phe-24–Met-44, Leu-61–Gly-81, Leu-147–Phe-167, and Leu-253–Ala-273. Positions Leu-25 to Lys-306 constitute an ABC transmembrane type-1 domain. Residues Val-338–Leu-573 form the ABC transporter domain. An ATP-binding site is contributed by Gly-372–Ser-379.

It belongs to the ABC transporter superfamily. Lipid exporter (TC 3.A.1.106) family. Homodimer.

The protein resides in the cell inner membrane. It carries out the reaction ATP + H2O + lipid A-core oligosaccharideSide 1 = ADP + phosphate + lipid A-core oligosaccharideSide 2.. Involved in lipopolysaccharide (LPS) biosynthesis. Translocates lipid A-core from the inner to the outer leaflet of the inner membrane. Transmembrane domains (TMD) form a pore in the inner membrane and the ATP-binding domain (NBD) is responsible for energy generation. This is ATP-dependent lipid A-core flippase from Chromohalobacter salexigens (strain ATCC BAA-138 / DSM 3043 / CIP 106854 / NCIMB 13768 / 1H11).